We begin with the raw amino-acid sequence, 475 residues long: Ribulose bisphosphate carboxylase large chain (475 aa).

A propeptide spanning residues 1-2 is cleaved from the precursor; the sequence is MS. Position 3 is an N-acetylproline (Pro-3). Lys-14 is subject to N6,N6,N6-trimethyllysine. Asn-123 and Thr-173 together coordinate substrate. Lys-175 serves as the catalytic Proton acceptor. Lys-177 serves as a coordination point for substrate. Lys-201, Asp-203, and Glu-204 together coordinate Mg(2+). Lys-201 is modified (N6-carboxylysine). The active-site Proton acceptor is the His-294. Substrate contacts are provided by Arg-295, His-327, and Ser-379.

This sequence belongs to the RuBisCO large chain family. Type I subfamily. As to quaternary structure, heterohexadecamer of 8 large chains and 8 small chains; disulfide-linked. The disulfide link is formed within the large subunit homodimers. Mg(2+) is required as a cofactor. The disulfide bond which can form in the large chain dimeric partners within the hexadecamer appears to be associated with oxidative stress and protein turnover.

Its subcellular location is the plastid. It localises to the chloroplast. The catalysed reaction is 2 (2R)-3-phosphoglycerate + 2 H(+) = D-ribulose 1,5-bisphosphate + CO2 + H2O. It carries out the reaction D-ribulose 1,5-bisphosphate + O2 = 2-phosphoglycolate + (2R)-3-phosphoglycerate + 2 H(+). Functionally, ruBisCO catalyzes two reactions: the carboxylation of D-ribulose 1,5-bisphosphate, the primary event in carbon dioxide fixation, as well as the oxidative fragmentation of the pentose substrate in the photorespiration process. Both reactions occur simultaneously and in competition at the same active site. The chain is Ribulose bisphosphate carboxylase large chain from Liquidambar styraciflua (Sweetgum tree).